A 343-amino-acid polypeptide reads, in one-letter code: MQEIVIPLKEKSYKVFLGELPEIKLKQKALIISDSIVSGLHLSYLLERLKALEVRVCVIESGEKYKNFHSLERILNNAFEMQLNRHSLMIALGGGVISDMVGFASSIYFRGIDFINIPTTLLAQVDASVGGKTGINTPYGKNLIGSFHQPKAVYIDLSFLKTLEKREFQAGVAEIIKMAVCFDKNLVERLETKDLKDCLEEVVFQSVNIKAQVVVQDEKERNIRAGLNYGHTFGHAIEKETDYERFLHGEAIAIGMCMANDLALSLGMLTLKEYERIENLLKKFDLIFHYKIIDLQKFYERLFLDKKSENKTIKFILPKGIGAFEATSHIPKETILKVLEKWH.

Residues 61 to 66 (SGEKYK), 95 to 99 (GVISD), 119 to 120 (TT), Lys-132, Lys-141, and 159 to 162 (FLKT) each bind NAD(+). Zn(2+) is bound by residues Glu-174, His-231, and His-248.

The protein belongs to the sugar phosphate cyclases superfamily. Dehydroquinate synthase family. Requires Co(2+) as cofactor. The cofactor is Zn(2+). NAD(+) serves as cofactor.

It localises to the cytoplasm. It catalyses the reaction 7-phospho-2-dehydro-3-deoxy-D-arabino-heptonate = 3-dehydroquinate + phosphate. Its pathway is metabolic intermediate biosynthesis; chorismate biosynthesis; chorismate from D-erythrose 4-phosphate and phosphoenolpyruvate: step 2/7. In terms of biological role, catalyzes the conversion of 3-deoxy-D-arabino-heptulosonate 7-phosphate (DAHP) to dehydroquinate (DHQ). This Helicobacter pylori (strain G27) protein is 3-dehydroquinate synthase.